The primary structure comprises 294 residues: Nucleotide-binding protein Reut_A0350 (294 aa).

8-15 (GISGSGKS) contributes to the ATP binding site. 57–60 (DIRS) provides a ligand contact to GTP.

Belongs to the RapZ-like family.

In terms of biological role, displays ATPase and GTPase activities. This chain is Nucleotide-binding protein Reut_A0350, found in Cupriavidus pinatubonensis (strain JMP 134 / LMG 1197) (Cupriavidus necator (strain JMP 134)).